The sequence spans 90 residues: Small ribosomal subunit protein uS17 (90 aa).

It belongs to the universal ribosomal protein uS17 family. In terms of assembly, part of the 30S ribosomal subunit.

One of the primary rRNA binding proteins, it binds specifically to the 5'-end of 16S ribosomal RNA. The polypeptide is Small ribosomal subunit protein uS17 (Burkholderia multivorans (strain ATCC 17616 / 249)).